The following is a 285-amino-acid chain: MPELPEVEVVRRGLAEHVTGKTITGVRVHHPRAVRRHEAGPADLTARLLDVRITGTGRRGKYLWLTLDDSAALVVHLGMSGQMLLGPIRDTRHLRIAAVLDDGTALSFVDQRTFGGWQLTEMVTVDGTDVPEPVAHIARDPLDPLFDRDRVVTVLRGKHSEIKRQLLDQTVVSGIGNIYADEALWRTKINGARIAAALPRRRLAELLDAAAEVMTDALGQGGTSFDSLYVNVNGESGYFDRSLDAYGREGEPCRRCGAIMRREKFMNRSSFYCPRCQPRPRVPRV.

Proline 2 (schiff-base intermediate with DNA) is an active-site residue. The active-site Proton donor is glutamate 3. Lysine 61 serves as the catalytic Proton donor; for beta-elimination activity. DNA is bound by residues histidine 93, arginine 112, and lysine 158. The FPG-type zinc finger occupies 244-278 (DAYGREGEPCRRCGAIMRREKFMNRSSFYCPRCQP). Arginine 268 (proton donor; for delta-elimination activity) is an active-site residue.

This sequence belongs to the FPG family. In terms of assembly, monomer. It depends on Zn(2+) as a cofactor.

It catalyses the reaction Hydrolysis of DNA containing ring-opened 7-methylguanine residues, releasing 2,6-diamino-4-hydroxy-5-(N-methyl)formamidopyrimidine.. It carries out the reaction 2'-deoxyribonucleotide-(2'-deoxyribose 5'-phosphate)-2'-deoxyribonucleotide-DNA = a 3'-end 2'-deoxyribonucleotide-(2,3-dehydro-2,3-deoxyribose 5'-phosphate)-DNA + a 5'-end 5'-phospho-2'-deoxyribonucleoside-DNA + H(+). Functionally, involved in base excision repair of DNA damaged by oxidation or by mutagenic agents. Acts as a DNA glycosylase that recognizes and removes damaged bases. Acts on oxidized purines, such as 7,8-dihydro-8-oxoguanine (8-oxoG) when paired with C, G or T. Has AP (apurinic/apyrimidinic) lyase activity and introduces nicks in the DNA strand. Cleaves the DNA backbone by beta-delta elimination to generate a single-strand break at the site of the removed base with both 3'- and 5'-phosphates. The sequence is that of Formamidopyrimidine-DNA glycosylase (fpg) from Mycolicibacterium smegmatis (strain ATCC 700084 / mc(2)155) (Mycobacterium smegmatis).